The following is a 214-amino-acid chain: Protein-L-isoaspartate O-methyltransferase 1 (214 aa).

Residue Ser62 is part of the active site.

Belongs to the methyltransferase superfamily. L-isoaspartyl/D-aspartyl protein methyltransferase family.

It is found in the cytoplasm. It catalyses the reaction [protein]-L-isoaspartate + S-adenosyl-L-methionine = [protein]-L-isoaspartate alpha-methyl ester + S-adenosyl-L-homocysteine. Functionally, catalyzes the methyl esterification of L-isoaspartyl residues in peptides and proteins that result from spontaneous decomposition of normal L-aspartyl and L-asparaginyl residues. It plays a role in the repair and/or degradation of damaged proteins. The chain is Protein-L-isoaspartate O-methyltransferase 1 from Syntrophobacter fumaroxidans (strain DSM 10017 / MPOB).